The sequence spans 525 residues: Glutamate--cysteine ligase (525 aa).

The protein belongs to the glutamate--cysteine ligase type 1 family. Type 1 subfamily.

It carries out the reaction L-cysteine + L-glutamate + ATP = gamma-L-glutamyl-L-cysteine + ADP + phosphate + H(+). The protein operates within sulfur metabolism; glutathione biosynthesis; glutathione from L-cysteine and L-glutamate: step 1/2. In Alcanivorax borkumensis (strain ATCC 700651 / DSM 11573 / NCIMB 13689 / SK2), this protein is Glutamate--cysteine ligase.